Here is a 273-residue protein sequence, read N- to C-terminus: Rhamnulose-1-phosphate aldolase (273 aa).

The active site involves glutamate 117. 3 residues coordinate Zn(2+): histidine 140, histidine 142, and histidine 211.

Belongs to the aldolase class II family. RhaD subfamily. Zn(2+) serves as cofactor.

The protein localises to the cytoplasm. The enzyme catalyses L-rhamnulose 1-phosphate = (S)-lactaldehyde + dihydroxyacetone phosphate. It functions in the pathway carbohydrate degradation; L-rhamnose degradation; glycerone phosphate from L-rhamnose: step 3/3. Functionally, catalyzes the reversible cleavage of L-rhamnulose-1-phosphate to dihydroxyacetone phosphate (DHAP) and L-lactaldehyde. The sequence is that of Rhamnulose-1-phosphate aldolase from Listeria monocytogenes serotype 4a (strain HCC23).